We begin with the raw amino-acid sequence, 77 residues long: Small, acid-soluble spore protein Tlp (77 aa).

Belongs to the Tlp family.

It localises to the spore core. The protein is Small, acid-soluble spore protein Tlp of Geobacillus sp. (strain WCH70).